The following is a 112-amino-acid chain: ATP synthase subunit c (112 aa).

2 helical membrane passes run 36–56 (FSVL…AIGM) and 81–101 (MFIA…IALI).

This sequence belongs to the ATPase C chain family. In terms of assembly, F-type ATPases have 2 components, F(1) - the catalytic core - and F(0) - the membrane proton channel. F(1) has five subunits: alpha(3), beta(3), gamma(1), delta(1), epsilon(1). F(0) has three main subunits: a(1), b(2) and c(10-14). The alpha and beta chains form an alternating ring which encloses part of the gamma chain. F(1) is attached to F(0) by a central stalk formed by the gamma and epsilon chains, while a peripheral stalk is formed by the delta and b chains.

It is found in the cell inner membrane. Its function is as follows. F(1)F(0) ATP synthase produces ATP from ADP in the presence of a proton or sodium gradient. F-type ATPases consist of two structural domains, F(1) containing the extramembraneous catalytic core and F(0) containing the membrane proton channel, linked together by a central stalk and a peripheral stalk. During catalysis, ATP synthesis in the catalytic domain of F(1) is coupled via a rotary mechanism of the central stalk subunits to proton translocation. In terms of biological role, key component of the F(0) channel; it plays a direct role in translocation across the membrane. A homomeric c-ring of between 10-14 subunits forms the central stalk rotor element with the F(1) delta and epsilon subunits. The polypeptide is ATP synthase subunit c (Campylobacter jejuni (strain RM1221)).